We begin with the raw amino-acid sequence, 86 residues long: Large ribosomal subunit protein bL27 (86 aa).

A disordered region spans residues 1–21; the sequence is MAHKKAAGSSRNGRDSESKRL.

This sequence belongs to the bacterial ribosomal protein bL27 family.

The protein is Large ribosomal subunit protein bL27 of Hahella chejuensis (strain KCTC 2396).